The chain runs to 60 residues: Putative transcriptional regulator XtpA (60 aa).

In terms of biological role, controls the expression of small non-coding RNA GcvB, which represses the expression of many amino acid transporter proteins and uptake of aminoglycoside antibiotics in cells. Might be a transcriptional activator. An RNA (xtr) with a tRNA-like fold possibly derived from tRNA-Arg(UCG) is encoded entirely within the protein; xtr does not have the sequence corresponding to tRNA anticodon or variable arms. 10 synonymous codon changes in the xtr region of xtpA have the same phenotype as a deletion mutation, suggesting the mRNA secondary structure is important for function. The protein is Putative transcriptional regulator XtpA of Escherichia coli (strain K12).